The following is a 227-amino-acid chain: Phosphoribosylformylglycinamidine synthase subunit PurQ (227 aa).

The 223-residue stretch at 3–225 folds into the Glutamine amidotransferase type-1 domain; sequence FAVIVLPGSN…VKNWRETHVA (223 aa). Cys-86 acts as the Nucleophile in catalysis. Residues His-194 and Glu-196 contribute to the active site.

As to quaternary structure, part of the FGAM synthase complex composed of 1 PurL, 1 PurQ and 2 PurS subunits.

The protein localises to the cytoplasm. The catalysed reaction is N(2)-formyl-N(1)-(5-phospho-beta-D-ribosyl)glycinamide + L-glutamine + ATP + H2O = 2-formamido-N(1)-(5-O-phospho-beta-D-ribosyl)acetamidine + L-glutamate + ADP + phosphate + H(+). It catalyses the reaction L-glutamine + H2O = L-glutamate + NH4(+). Its pathway is purine metabolism; IMP biosynthesis via de novo pathway; 5-amino-1-(5-phospho-D-ribosyl)imidazole from N(2)-formyl-N(1)-(5-phospho-D-ribosyl)glycinamide: step 1/2. Its function is as follows. Part of the phosphoribosylformylglycinamidine synthase complex involved in the purines biosynthetic pathway. Catalyzes the ATP-dependent conversion of formylglycinamide ribonucleotide (FGAR) and glutamine to yield formylglycinamidine ribonucleotide (FGAM) and glutamate. The FGAM synthase complex is composed of three subunits. PurQ produces an ammonia molecule by converting glutamine to glutamate. PurL transfers the ammonia molecule to FGAR to form FGAM in an ATP-dependent manner. PurS interacts with PurQ and PurL and is thought to assist in the transfer of the ammonia molecule from PurQ to PurL. This Bacillus licheniformis (strain ATCC 14580 / DSM 13 / JCM 2505 / CCUG 7422 / NBRC 12200 / NCIMB 9375 / NCTC 10341 / NRRL NRS-1264 / Gibson 46) protein is Phosphoribosylformylglycinamidine synthase subunit PurQ.